A 317-amino-acid chain; its full sequence is 4-hydroxy-3-methylbut-2-enyl diphosphate reductase (317 aa).

A [4Fe-4S] cluster-binding site is contributed by Cys-12. (2E)-4-hydroxy-3-methylbut-2-enyl diphosphate-binding residues include His-41 and His-74. Dimethylallyl diphosphate-binding residues include His-41 and His-74. Positions 41 and 74 each coordinate isopentenyl diphosphate. Cys-97 is a [4Fe-4S] cluster binding site. Residue His-125 coordinates (2E)-4-hydroxy-3-methylbut-2-enyl diphosphate. His-125 is a dimethylallyl diphosphate binding site. His-125 lines the isopentenyl diphosphate pocket. Residue Glu-127 is the Proton donor of the active site. A (2E)-4-hydroxy-3-methylbut-2-enyl diphosphate-binding site is contributed by Thr-168. A [4Fe-4S] cluster-binding site is contributed by Cys-198. The (2E)-4-hydroxy-3-methylbut-2-enyl diphosphate site is built by Ser-226, Ser-227, Asn-228, and Ser-270. Ser-226, Ser-227, Asn-228, and Ser-270 together coordinate dimethylallyl diphosphate. Positions 226, 227, 228, and 270 each coordinate isopentenyl diphosphate.

Belongs to the IspH family. In terms of assembly, homodimer. The cofactor is [4Fe-4S] cluster.

It carries out the reaction isopentenyl diphosphate + 2 oxidized [2Fe-2S]-[ferredoxin] + H2O = (2E)-4-hydroxy-3-methylbut-2-enyl diphosphate + 2 reduced [2Fe-2S]-[ferredoxin] + 2 H(+). It catalyses the reaction dimethylallyl diphosphate + 2 oxidized [2Fe-2S]-[ferredoxin] + H2O = (2E)-4-hydroxy-3-methylbut-2-enyl diphosphate + 2 reduced [2Fe-2S]-[ferredoxin] + 2 H(+). Its pathway is isoprenoid biosynthesis; dimethylallyl diphosphate biosynthesis; dimethylallyl diphosphate from (2E)-4-hydroxy-3-methylbutenyl diphosphate: step 1/1. The protein operates within isoprenoid biosynthesis; isopentenyl diphosphate biosynthesis via DXP pathway; isopentenyl diphosphate from 1-deoxy-D-xylulose 5-phosphate: step 6/6. Catalyzes the conversion of 1-hydroxy-2-methyl-2-(E)-butenyl 4-diphosphate (HMBPP) into a mixture of isopentenyl diphosphate (IPP) and dimethylallyl diphosphate (DMAPP). Acts in the terminal step of the DOXP/MEP pathway for isoprenoid precursor biosynthesis. The polypeptide is 4-hydroxy-3-methylbut-2-enyl diphosphate reductase (Proteus mirabilis (strain HI4320)).